Consider the following 310-residue polypeptide: Cysteine synthase (310 aa).

N6-(pyridoxal phosphate)lysine is present on Lys46. Pyridoxal 5'-phosphate-binding positions include Asn76, 180–184 (GTGGT), and Ser268.

Belongs to the cysteine synthase/cystathionine beta-synthase family. As to quaternary structure, homodimer. The cofactor is pyridoxal 5'-phosphate.

It carries out the reaction O-acetyl-L-serine + hydrogen sulfide = L-cysteine + acetate. It functions in the pathway amino-acid biosynthesis; L-cysteine biosynthesis; L-cysteine from L-serine: step 2/2. This Staphylococcus aureus (strain Mu50 / ATCC 700699) protein is Cysteine synthase (cysK).